Consider the following 46-residue polypeptide: Succinate dehydrogenase subunit 8, mitochondrial (46 aa).

As to quaternary structure, component of complex II composed of eight subunits in plants: four classical SDH subunits SDH1, SDH2, SDH3 and SDH4 (a flavoprotein (FP), an iron-sulfur protein (IP), and a cytochrome b composed of a large and a small subunit.), as well as four subunits unknown in mitochondria from bacteria and heterotrophic eukaryotes.

It is found in the mitochondrion inner membrane. It participates in carbohydrate metabolism; tricarboxylic acid cycle. The sequence is that of Succinate dehydrogenase subunit 8, mitochondrial from Arabidopsis thaliana (Mouse-ear cress).